Here is a 924-residue protein sequence, read N- to C-terminus: Exocyst complex component 2 (924 aa).

Positions 8-93 constitute an IPT/TIG domain; the sequence is PLVTGISPNE…GTSTVSFKLL (86 aa). The stretch at 240–260 forms a coiled coil; that stretch reads QKLENVLNRASNTADTLFQEV. 3 positions are modified to phosphoserine: S431, S432, and S435. T440 bears the Phosphothreonine mark. K454 is modified (N6-acetyllysine).

Belongs to the SEC5 family. The exocyst complex is composed of EXOC1, EXOC2, EXOC3, EXOC4, EXOC5, EXOC6, EXOC7 and EXOC8. Interacts with EXOC3L1. Interacts with GNEFR/DELGEF; this interaction occurs only in the presence of magnesium or manganese and is stimulated by dCTP or GTP. Interacts with RALA and RALB. Interacts with ARL13B; regulates ARL13B localization to the cilium membrane.

The protein resides in the midbody. The protein localises to the midbody ring. In terms of biological role, component of the exocyst complex involved in the docking of exocytic vesicles with fusion sites on the plasma membrane. The polypeptide is Exocyst complex component 2 (Exoc2) (Mus musculus (Mouse)).